A 231-amino-acid chain; its full sequence is NADH-ubiquinone oxidoreductase chain 4 (231 aa).

6 helical membrane-spanning segments follow: residues 1-21 (PIAGSMVLAAILLKLGGYGII), 34-54 (MFLPFLVLALWGAILANLTCL), 63-85 (IAYSSISHMGLVVAAIIIQTPWG), 89-111 (AMALMVAHGFTSSSLFCLANTTY), 128-148 (ILPMATTWWLLANLLNIATPP), and 156-176 (LLIMSALFNWCPTTIILLGLS).

This sequence belongs to the complex I subunit 4 family.

The protein resides in the mitochondrion membrane. The enzyme catalyses a ubiquinone + NADH + 5 H(+)(in) = a ubiquinol + NAD(+) + 4 H(+)(out). Its function is as follows. Core subunit of the mitochondrial membrane respiratory chain NADH dehydrogenase (Complex I) that is believed to belong to the minimal assembly required for catalysis. Complex I functions in the transfer of electrons from NADH to the respiratory chain. The immediate electron acceptor for the enzyme is believed to be ubiquinone. This Bothriechis lateralis (Side-striped palm pitviper) protein is NADH-ubiquinone oxidoreductase chain 4 (MT-ND4).